We begin with the raw amino-acid sequence, 474 residues long: Shugoshin-1 (474 aa).

Disordered stretches follow at residues 1 to 53 (MTST…KPNA), 189 to 226 (VESQSAVSSNTVCQEPPQDGKQKRMPQRRRSSRLNQGS), 322 to 356 (NSKQNHLTGSQSSLSFNTVDTPEPPEDNTVKRCSK), and 422 to 442 (VSMEQRTNQEQDGDCFSRKSN). Polar residues-rich tracts occupy residues 12-22 (GSLNPPHSNPS) and 190-201 (ESQSAVSSNTVC). The segment covering 211-220 (KRMPQRRRSS) has biased composition (basic residues). Composition is skewed to polar residues over residues 322–341 (NSKQNHLTGSQSSLSFNTVD) and 422–431 (VSMEQRTNQE).

Belongs to the shugoshin family. In terms of tissue distribution, highly expressed in tissues containing meiocytes. Expressed at much lower level in leaves and pollen-containing flowers.

It is found in the nucleus. The protein resides in the chromosome. Its subcellular location is the centromere. Its function is as follows. Plays a central role in chromosome cohesion during meiosis I by preventing premature dissociation of cohesin complex from centromeres after prophase, when most of cohesin complex dissociates from chromosomes arms. Required for maintenance of centromeric cohesion before prophase II and correct segregation of chromatids during meiosis II. Has apparently no function in mitosis. This Zea mays (Maize) protein is Shugoshin-1.